The primary structure comprises 321 residues: Ribose-phosphate pyrophosphokinase (321 aa).

ATP contacts are provided by residues aspartate 39 to glutamate 41 and arginine 98 to glutamine 99. Residues histidine 132 and aspartate 170 each contribute to the Mg(2+) site. The active site involves lysine 195. D-ribose 5-phosphate is bound by residues arginine 197, aspartate 221, and aspartate 225–threonine 229.

It belongs to the ribose-phosphate pyrophosphokinase family. Class I subfamily. In terms of assembly, homohexamer. Mg(2+) serves as cofactor.

It localises to the cytoplasm. The enzyme catalyses D-ribose 5-phosphate + ATP = 5-phospho-alpha-D-ribose 1-diphosphate + AMP + H(+). Its pathway is metabolic intermediate biosynthesis; 5-phospho-alpha-D-ribose 1-diphosphate biosynthesis; 5-phospho-alpha-D-ribose 1-diphosphate from D-ribose 5-phosphate (route I): step 1/1. Its function is as follows. Involved in the biosynthesis of the central metabolite phospho-alpha-D-ribosyl-1-pyrophosphate (PRPP) via the transfer of pyrophosphoryl group from ATP to 1-hydroxyl of ribose-5-phosphate (Rib-5-P). This Mycoplasmopsis pulmonis (strain UAB CTIP) (Mycoplasma pulmonis) protein is Ribose-phosphate pyrophosphokinase.